A 132-amino-acid chain; its full sequence is MADFKIILSDPETGRSYKIDATGPAAGGFVGKRIGDEIDGDVLGFAGYTIKITGATDKTGIPSRRDLPGPSRRRLLLSKGVGFHPVMDGERRRKSVRGNEISADIVQINAAVTQSGAKPLAEYFSQPEAAAE.

It belongs to the eukaryotic ribosomal protein eS6 family.

The sequence is that of Small ribosomal subunit protein eS6 from Methanoculleus marisnigri (strain ATCC 35101 / DSM 1498 / JR1).